Consider the following 515-residue polypeptide: 1-pyrroline-5-carboxylate dehydrogenase (515 aa).

Residues E286 and C320 contribute to the active site.

Belongs to the aldehyde dehydrogenase family. RocA subfamily.

It catalyses the reaction L-glutamate 5-semialdehyde + NAD(+) + H2O = L-glutamate + NADH + 2 H(+). It functions in the pathway amino-acid degradation; L-proline degradation into L-glutamate; L-glutamate from L-proline: step 2/2. The protein is 1-pyrroline-5-carboxylate dehydrogenase of Oceanobacillus iheyensis (strain DSM 14371 / CIP 107618 / JCM 11309 / KCTC 3954 / HTE831).